The following is a 108-amino-acid chain: T cell receptor alpha variable 1-1 (108 aa).

Residues 1-18 form the signal peptide; sequence MWGAFLLYVSMKMGGTAG. Residues 19–108 enclose the Ig-like domain; the sequence is QSLEQPSEVT…DSASYFCAVR (90 aa). Asparagine 38 is a glycosylation site (N-linked (GlcNAc...) asparagine). A disulfide bridge links cysteine 39 with cysteine 105.

In terms of assembly, alpha-beta TR is a heterodimer composed of an alpha and beta chain; disulfide-linked. The alpha-beta TR is associated with the transmembrane signaling CD3 coreceptor proteins to form the TR-CD3 (TcR or TCR). The assembly of alpha-beta TR heterodimers with CD3 occurs in the endoplasmic reticulum where a single alpha-beta TR heterodimer associates with one CD3D-CD3E heterodimer, one CD3G-CD3E heterodimer and one CD247 homodimer forming a stable octameric structure. CD3D-CD3E and CD3G-CD3E heterodimers preferentially associate with TR alpha and TR beta chains, respectively. The association of the CD247 homodimer is the last step of TcR assembly in the endoplasmic reticulum and is required for transport to the cell surface.

Its subcellular location is the cell membrane. Its function is as follows. V region of the variable domain of T cell receptor (TR) alpha chain that participates in the antigen recognition. Alpha-beta T cell receptors are antigen specific receptors which are essential to the immune response and are present on the cell surface of T lymphocytes. Recognize peptide-major histocompatibility (MH) (pMH) complexes that are displayed by antigen presenting cells (APC), a prerequisite for efficient T cell adaptive immunity against pathogens. Binding of alpha-beta TR to pMH complex initiates TR-CD3 clustering on the cell surface and intracellular activation of LCK that phosphorylates the ITAM motifs of CD3G, CD3D, CD3E and CD247 enabling the recruitment of ZAP70. In turn ZAP70 phosphorylates LAT, which recruits numerous signaling molecules to form the LAT signalosome. The LAT signalosome propagates signal branching to three major signaling pathways, the calcium, the mitogen-activated protein kinase (MAPK) kinase and the nuclear factor NF-kappa-B (NF-kB) pathways, leading to the mobilization of transcription factors that are critical for gene expression and essential for T cell growth and differentiation. The T cell repertoire is generated in the thymus, by V-(D)-J rearrangement. This repertoire is then shaped by intrathymic selection events to generate a peripheral T cell pool of self-MH restricted, non-autoaggressive T cells. Post-thymic interaction of alpha-beta TR with the pMH complexes shapes TR structural and functional avidity. The polypeptide is T cell receptor alpha variable 1-1 (Homo sapiens (Human)).